A 513-amino-acid chain; its full sequence is MQLNSTEISELIKQRIAQFNVVSEAHNEGTIVSVSDGIIRVHGLADVMQGEMISLPGNRYAIALNLERDSVGAVVMGPYADLAEGMKVKCTGRILEVPVGRGLLGRVVNTLGAPIDGKGALDHDGFSAVEAIAPGVIERQSVDEPVQTGYKSVDAMIPIGRGQRELIIGDRQTGKTALAIDAIINQRDSGIKCVYVAIGQKASTISNVVRKLEEHGALENTIVVVATASESAALQYLAPYAGCAMGEYFRDRGEDALIIYDDLSKQAVAYRQISLLLRRPPGREAYPGDVFYLHSRLLERASRVNADYVEAFTKGEVKGKTGSLTALPIIETQAGDVSAFVPTNVISITDGQIFLESNLFNAGIRPAVNPGISVSRVGGAAQTKIMKKLSGGIRTALAQYRELAAFSQFASDLDDATRKQLSHGQKVTELLKQKQYAPMSVAQQSLVLFAAERGYLEDVELSKVGSFEAALLAYADREHGELLQQIDQTGAYNDEIEGKFKGILDTFKATQSW.

169–176 (GDRQTGKT) is an ATP binding site.

Belongs to the ATPase alpha/beta chains family. In terms of assembly, F-type ATPases have 2 components, CF(1) - the catalytic core - and CF(0) - the membrane proton channel. CF(1) has five subunits: alpha(3), beta(3), gamma(1), delta(1), epsilon(1). CF(0) has three main subunits: a(1), b(2) and c(9-12). The alpha and beta chains form an alternating ring which encloses part of the gamma chain. CF(1) is attached to CF(0) by a central stalk formed by the gamma and epsilon chains, while a peripheral stalk is formed by the delta and b chains.

It is found in the cell inner membrane. The enzyme catalyses ATP + H2O + 4 H(+)(in) = ADP + phosphate + 5 H(+)(out). Its function is as follows. Produces ATP from ADP in the presence of a proton gradient across the membrane. The alpha chain is a regulatory subunit. The chain is ATP synthase subunit alpha from Pectobacterium carotovorum subsp. carotovorum (strain PC1).